We begin with the raw amino-acid sequence, 224 residues long: uncharacterized protein (224 aa).

Transmembrane regions (helical) follow at residues 32–52 (ILTL…PLVV), 60–80 (LFTN…IYFF), 100–120 (IIYL…SGLG), 130–150 (AIAY…LFGF), and 162–182 (LGFS…FGII).

It belongs to the derlin family.

It is found in the endoplasmic reticulum membrane. This is an uncharacterized protein from Schizosaccharomyces pombe (strain 972 / ATCC 24843) (Fission yeast).